The chain runs to 488 residues: Prostaglandin E2 receptor EP4 subtype (488 aa).

Over Met1–Ser19 the chain is Extracellular. The N-linked (GlcNAc...) asparagine glycan is linked to Asn7. A helical transmembrane segment spans residues Pro20–Cys43. Topologically, residues Lys44–Tyr55 are cytoplasmic. Residues Thr56 to Thr79 traverse the membrane as a helical segment. The Extracellular segment spans residues Tyr80–Thr96. The cysteines at positions 92 and 170 are disulfide-linked. Residues Phe97–Val115 form a helical membrane-spanning segment. Residues Glu116–Leu135 are Cytoplasmic-facing. The chain crosses the membrane as a helical span at residues Ala136–Ser160. The Extracellular segment spans residues Ser161–Tyr184. A helical membrane pass occupies residues Ser185–Leu211. Over Arg212–Glu267 the chain is Cytoplasmic. The helical transmembrane segment at Ile268 to Asn295 threads the bilayer. Residues Gln296 to Leu312 are Extracellular-facing. The chain crosses the membrane as a helical span at residues Gln313–Leu332. Over Arg333–Ile488 the chain is Cytoplasmic. A disordered region spans residues Arg356–His376. Positions Gln361–His376 are enriched in polar residues. Residues Ser374, Ser377, Ser379, and Ser382 each carry the phosphoserine modification. The segment covering Ser437 to Glu449 has biased composition (polar residues). Residues Ser437–Thr475 form a disordered region.

The protein belongs to the G-protein coupled receptor 1 family. As to quaternary structure, interacts with FEM1A. In terms of processing, phosphorylation mediates agonist-mediated desensitization by promoting cytoplasmic retention. As to expression, high in intestine and in peripheral blood mononuclear cells; low in lung, kidney, thymus, uterus, vasculature and brain. Not found in liver, heart, retina oe skeletal muscle.

It localises to the cell membrane. Its function is as follows. Receptor for prostaglandin E2 (PGE2). The activity of this receptor is mediated by G(s) proteins that stimulate adenylate cyclase. Has a relaxing effect on smooth muscle. May play an important role in regulating renal hemodynamics, intestinal epithelial transport, adrenal aldosterone secretion, and uterine function. The protein is Prostaglandin E2 receptor EP4 subtype (PTGER4) of Homo sapiens (Human).